We begin with the raw amino-acid sequence, 183 residues long: ATP-dependent protease subunit HslV (183 aa).

Residue Thr7 is part of the active site. 3 residues coordinate Na(+): Gly162, Cys165, and Thr168.

The protein belongs to the peptidase T1B family. HslV subfamily. As to quaternary structure, a double ring-shaped homohexamer of HslV is capped on each side by a ring-shaped HslU homohexamer. The assembly of the HslU/HslV complex is dependent on binding of ATP.

The protein resides in the cytoplasm. It catalyses the reaction ATP-dependent cleavage of peptide bonds with broad specificity.. Its activity is regulated as follows. Allosterically activated by HslU binding. Functionally, protease subunit of a proteasome-like degradation complex believed to be a general protein degrading machinery. This chain is ATP-dependent protease subunit HslV, found in Alkalilimnicola ehrlichii (strain ATCC BAA-1101 / DSM 17681 / MLHE-1).